We begin with the raw amino-acid sequence, 258 residues long: Large ribosomal subunit protein bL19m (258 aa).

The disordered stretch occupies residues 235–258; sequence SKGLTGGVGGGGGKQKGQESKKKN. A compositionally biased stretch (gly residues) spans 238–249; sequence LTGGVGGGGGKQ.

This sequence belongs to the bacterial ribosomal protein bL19 family. In terms of assembly, component of the mitochondrial large ribosomal subunit (mt-LSU). Mature N.crassa 74S mitochondrial ribosomes consist of a small (37S) and a large (54S) subunit. The 37S small subunit contains a 16S ribosomal RNA (16S mt-rRNA) and 32 different proteins. The 54S large subunit contains a 23S rRNA (23S mt-rRNA) and 42 different proteins.

The protein resides in the mitochondrion. Functionally, component of the mitochondrial ribosome (mitoribosome), a dedicated translation machinery responsible for the synthesis of mitochondrial genome-encoded proteins, including at least some of the essential transmembrane subunits of the mitochondrial respiratory chain. The mitoribosomes are attached to the mitochondrial inner membrane and translation products are cotranslationally integrated into the membrane. In Neurospora crassa (strain ATCC 24698 / 74-OR23-1A / CBS 708.71 / DSM 1257 / FGSC 987), this protein is Large ribosomal subunit protein bL19m (img1).